A 96-amino-acid chain; its full sequence is Large ribosomal subunit protein bL27 (96 aa).

Residues 1–9 constitute a propeptide that is removed on maturation; the sequence is MLRLDLQFF.

This sequence belongs to the bacterial ribosomal protein bL27 family. In terms of processing, the N-terminus is cleaved by ribosomal processing cysteine protease Prp.

The polypeptide is Large ribosomal subunit protein bL27 (Anoxybacillus flavithermus (strain DSM 21510 / WK1)).